Consider the following 589-residue polypeptide: Oligo-1,6-glucosidase IMA3 (589 aa).

The active-site Nucleophile is the Asp-215. Catalysis depends on Glu-277, which acts as the Proton donor.

Belongs to the glycosyl hydrolase 13 family.

The protein resides in the cytoplasm. The enzyme catalyses Hydrolysis of (1-&gt;6)-alpha-D-glucosidic linkages in some oligosaccharides produced from starch and glycogen by alpha-amylase, and in isomaltose.. Functionally, alpha-glucosidase with broad substrate specificity for alpha-1,4- and alpha-1,6-glucosides. Not required for isomaltose utilization, but overexpression allows the IMA1 null mutant to grow on isomaltose. The protein is Oligo-1,6-glucosidase IMA3 (IMA3) of Saccharomyces cerevisiae (strain ATCC 204508 / S288c) (Baker's yeast).